The chain runs to 192 residues: Probable apo-citrate lyase phosphoribosyl-dephospho-CoA transferase (192 aa).

Belongs to the CitX family.

The catalysed reaction is apo-[citrate lyase ACP] + 2'-(5''-triphospho-alpha-D-ribosyl)-3'-dephospho-CoA = holo-[citrate lyase ACP] + diphosphate. In terms of biological role, transfers 2-(5''-triphosphoribosyl)-3'-dephosphocoenzyme-A on a serine residue to the apo-acyl carrier protein (gamma chain) of the citrate lyase to yield holo-acyl carrier protein. This is Probable apo-citrate lyase phosphoribosyl-dephospho-CoA transferase from Streptococcus pyogenes serotype M18 (strain MGAS8232).